The sequence spans 379 residues: Tryptophan 2,3-dioxygenase (379 aa).

Substrate is bound by residues 57 to 61 (FIITH) and Arg128. His312 serves as a coordination point for heme. Substrate is bound at residue Thr327.

It belongs to the tryptophan 2,3-dioxygenase family. Homotetramer. Dimer of dimers. The cofactor is heme.

It catalyses the reaction L-tryptophan + O2 = N-formyl-L-kynurenine. Its pathway is amino-acid degradation; L-tryptophan degradation via kynurenine pathway; L-kynurenine from L-tryptophan: step 1/2. The protein operates within pigment biosynthesis; ommochrome biosynthesis. In terms of biological role, heme-dependent dioxygenase that catalyzes the oxidative cleavage of the L-tryptophan (L-Trp) pyrrole ring and converts L-tryptophan to N-formyl-L-kynurenine. Catalyzes the oxidative cleavage of the indole moiety. Required during larval growth to control the level of potentially harmful free tryptophan in the hemolymph. In the adult the same reaction is the first step in the ommochrome biosynthetic pathway. This chain is Tryptophan 2,3-dioxygenase, found in Drosophila melanogaster (Fruit fly).